The primary structure comprises 385 residues: Bifunctional chorismate mutase/prephenate dehydratase (385 aa).

The Chorismate mutase domain occupies Met1 to Leu92. 7 residues coordinate substrate: Arg11, Arg28, Lys39, Asp48, Glu52, Ser84, and Gln88. Residues Ser105 to Arg285 form the Prephenate dehydratase domain. The interval Lys286 to Pro385 is regulatory. Residues Thr299–Pro376 form the ACT domain.

The protein localises to the cytoplasm. The catalysed reaction is chorismate = prephenate. It catalyses the reaction prephenate + H(+) = 3-phenylpyruvate + CO2 + H2O. Its pathway is amino-acid biosynthesis; L-phenylalanine biosynthesis; phenylpyruvate from prephenate: step 1/1. It participates in metabolic intermediate biosynthesis; prephenate biosynthesis; prephenate from chorismate: step 1/1. Functionally, catalyzes the Claisen rearrangement of chorismate to prephenate and the decarboxylation/dehydration of prephenate to phenylpyruvate. This chain is Bifunctional chorismate mutase/prephenate dehydratase (pheA), found in Buchnera aphidicola subsp. Schizaphis graminum (strain Sg).